A 243-amino-acid chain; its full sequence is Orotidine 5'-phosphate decarboxylase (243 aa).

Residues aspartate 12, lysine 34, 61–70 (DLKFHDIPNT), threonine 125, arginine 187, glutamine 196, glycine 216, and arginine 217 each bind substrate. Lysine 63 serves as the catalytic Proton donor.

The protein belongs to the OMP decarboxylase family. Type 1 subfamily. Homodimer.

The catalysed reaction is orotidine 5'-phosphate + H(+) = UMP + CO2. The protein operates within pyrimidine metabolism; UMP biosynthesis via de novo pathway; UMP from orotate: step 2/2. Catalyzes the decarboxylation of orotidine 5'-monophosphate (OMP) to uridine 5'-monophosphate (UMP). The chain is Orotidine 5'-phosphate decarboxylase from Heliobacterium modesticaldum (strain ATCC 51547 / Ice1).